The sequence spans 311 residues: Ribosomal RNA small subunit methyltransferase H (311 aa).

S-adenosyl-L-methionine-binding positions include 33–35, aspartate 53, phenylalanine 80, aspartate 101, and glutamine 108; that span reads AGH.

Belongs to the methyltransferase superfamily. RsmH family.

The protein localises to the cytoplasm. The catalysed reaction is cytidine(1402) in 16S rRNA + S-adenosyl-L-methionine = N(4)-methylcytidine(1402) in 16S rRNA + S-adenosyl-L-homocysteine + H(+). Functionally, specifically methylates the N4 position of cytidine in position 1402 (C1402) of 16S rRNA. This Alkaliphilus oremlandii (strain OhILAs) (Clostridium oremlandii (strain OhILAs)) protein is Ribosomal RNA small subunit methyltransferase H.